The following is a 419-amino-acid chain: Hyaluronan synthase (419 aa).

The next 5 membrane-spanning stretches (helical) occupy residues 8–28, 33–53, 318–338, 345–365, and 376–396; these read LIVLSFIFLISILIYLNMYLF, VGIYGVILITYLVIKLGLSFL, IVALWTIFEVVMFMMLIVAIG, AIQLDLIKLFAFLSIIFIVAL, and PASFLLSPLYGILHLFVLQPL.

This sequence belongs to the NodC/HAS family. Mg(2+) is required as a cofactor.

The protein resides in the cell membrane. The enzyme catalyses [hyaluronan](n) + UDP-N-acetyl-alpha-D-glucosamine = N-acetyl-beta-D-glucosaminyl-(1-&gt;4)-[hyaluronan](n) + UDP + H(+). It catalyses the reaction N-acetyl-beta-D-glucosaminyl-(1-&gt;4)-[hyaluronan](n) + UDP-alpha-D-glucuronate = [hyaluronan](n+1) + UDP + H(+). The protein operates within glycan biosynthesis; hyaluronan biosynthesis. In terms of biological role, glycosaminoglycan synthesis. The hyaluronic acid capsule is involved in the pathogenicity of group A Streptococci; it may be the major virulence determinant. This chain is Hyaluronan synthase (hasA), found in Streptococcus pyogenes serotype M1.